Consider the following 559-residue polypeptide: Protein NRT1/ PTR FAMILY 2.8 (559 aa).

Helical transmembrane passes span 57 to 77 (GVFLVNVINIWFGSCNILTLA), 92 to 112 (LLLGSIASFIGMGIFALTAAL), 132 to 152 (KWQLGVLFSGLGLLAIGAGGV), 178 to 198 (FFNWWYFSFTVALVIALTGVV), 206 to 226 (WVIGFVIPTACLALSITTFVI), 321 to 341 (LKCVTAILPVWVTGIACFILT), 374 to 394 (VSMITLAIWISLYECVIIPIV), 404 to 424 (LTLKHRIEIVMGIICMIVAGF), 437 to 457 (GSFVSPVSIVMLLPQFALAGL), 481 to 501 (VAGAIFFLSSSIASYICTLLI), and 529 to 549 (YFFIIAGIQVANLLYFRLFAS).

It belongs to the major facilitator superfamily. Proton-dependent oligopeptide transporter (POT/PTR) (TC 2.A.17) family. Expressed in flowers.

The protein resides in the membrane. The polypeptide is Protein NRT1/ PTR FAMILY 2.8 (NPF2.8) (Arabidopsis thaliana (Mouse-ear cress)).